Consider the following 354-residue polypeptide: tRNA N6-adenosine threonylcarbamoyltransferase (354 aa).

Residues His121, His125, and Tyr142 each contribute to the a divalent metal cation site. Substrate is bound by residues 142–146, Asp174, Gly189, Glu193, and Asn285; that span reads YVSGG. Residue Asp313 coordinates a divalent metal cation.

The protein belongs to the KAE1 / TsaD family. As to quaternary structure, component of the EKC/KEOPS complex composed of at least bud32, cgi121, gon7, kae1 and pcc1; the whole complex dimerizes. Requires a divalent metal cation as cofactor.

The protein resides in the cytoplasm. It localises to the nucleus. It carries out the reaction L-threonylcarbamoyladenylate + adenosine(37) in tRNA = N(6)-L-threonylcarbamoyladenosine(37) in tRNA + AMP + H(+). Its function is as follows. Component of the EKC/KEOPS complex that is required for the formation of a threonylcarbamoyl group on adenosine at position 37 (t(6)A37) in tRNAs that read codons beginning with adenine. The complex is probably involved in the transfer of the threonylcarbamoyl moiety of threonylcarbamoyl-AMP (TC-AMP) to the N6 group of A37. Kae1 likely plays a direct catalytic role in this reaction, but requires other protein(s) of the complex to fulfill this activity. The EKC/KEOPS complex also promotes both telomere uncapping and telomere elongation. The complex is required for efficient recruitment of transcriptional coactivators. The sequence is that of tRNA N6-adenosine threonylcarbamoyltransferase (gpe-1) from Neurospora crassa (strain ATCC 24698 / 74-OR23-1A / CBS 708.71 / DSM 1257 / FGSC 987).